The primary structure comprises 417 residues: Neuropeptide FF receptor 2 (417 aa).

The Extracellular portion of the chain corresponds to 1–45; the sequence is MGKRWDSNSSGSWDHIWSGNDTQHPWYSDINITYMNYYLHQPHVT. Residues Asn8, Asn20, and Asn31 are each glycosylated (N-linked (GlcNAc...) asparagine). Residues 46–66 traverse the membrane as a helical segment; that stretch reads AVFISSYFLIFFLCMVGNTVV. Topologically, residues 67-82 are cytoplasmic; that stretch reads CFVVIRNRYMHTVTNF. Residues 83–103 traverse the membrane as a helical segment; it reads FIFNLAISDLLVGIFCMPITL. Topologically, residues 104–119 are extracellular; the sequence is LDNIIAGWPFGSSMCK. Cys118 and Cys206 are oxidised to a cystine. Residues 120-140 traverse the membrane as a helical segment; the sequence is ISGLVQGISVAASVFTLVAIA. Over 141–160 the chain is Cytoplasmic; it reads VDRFRCVVYPFKPKLTVKTA. A helical membrane pass occupies residues 161–181; that stretch reads FVMIVIIWGLAITIMTPSAIM. Residues 182–217 are Extracellular-facing; the sequence is LHVQEEKYYRVRLSSHNKTSTVYWCREDWPNQEMRR. N-linked (GlcNAc...) asparagine glycosylation is present at Asn198. The helical transmembrane segment at 218–238 threads the bilayer; it reads IYTTVLFATIYLAPLSLIVIM. Residues 239 to 274 are Cytoplasmic-facing; that stretch reads YARIGASLFKTSAHSTGKQRLEQWHVSKKKQKVIKM. A helical transmembrane segment spans residues 275-295; it reads LLTVALLFILSWLPLWTLMML. The Extracellular portion of the chain corresponds to 296–310; it reads SDYADLSPNKLRVIN. The helical transmembrane segment at 311–331 threads the bilayer; the sequence is IYVYPFAHWLAFCNSSVNPII. The Cytoplasmic portion of the chain corresponds to 332 to 417; sequence YGFFNENFRS…TGEATNSTET (86 aa). The disordered stretch occupies residues 378 to 417; it reads HEPASQNPSGENLGCRKSADNPTQESLMEETGEATNSTET.

Belongs to the G-protein coupled receptor 1 family.

It localises to the cell membrane. Receptor for NPAF (A-18-F-amide) and NPFF (F-8-F-amide) neuropeptides, also known as morphine-modulating peptides. Can also be activated by a variety of naturally occurring or synthetic FMRF-amide like ligands. This receptor mediates its action by association with G proteins that activate a phosphatidylinositol-calcium second messenger system. This chain is Neuropeptide FF receptor 2 (Npffr2), found in Rattus norvegicus (Rat).